A 79-amino-acid chain; its full sequence is Protein AC4 (79 aa).

Disordered regions lie at residues 1-24 (MCSY…SPQP) and 36-79 (LNPA…MPRR). Residues 38 to 47 (PAPTSSPTST) are compositionally biased toward low complexity. Residues 48–61 (RTEIQLNGENSRST) are compositionally biased toward polar residues.

The protein belongs to the geminiviridae protein AC4/C4 family.

Its function is as follows. Pathogenicity determinant. May act as a suppressor of RNA-mediated gene silencing, also known as post-transcriptional gene silencing (PTGS), a mechanism of plant viral defense that limits the accumulation of viral RNAs. In Abutilon (Upland cotton), this protein is Protein AC4.